Consider the following 536-residue polypeptide: Glutamyl-tRNA(Gln) amidotransferase subunit B, mitochondrial (536 aa).

Belongs to the GatB/GatE family. GatB subfamily. As to quaternary structure, subunit of the heterotrimeric GatFAB amidotransferase (AdT) complex, composed of A, B and F subunits.

The protein localises to the mitochondrion. It carries out the reaction L-glutamyl-tRNA(Gln) + L-glutamine + ATP + H2O = L-glutaminyl-tRNA(Gln) + L-glutamate + ADP + phosphate + H(+). Functionally, allows the formation of correctly charged Gln-tRNA(Gln) through the transamidation of misacylated Glu-tRNA(Gln) in the mitochondria. The reaction takes place in the presence of glutamine and ATP through an activated gamma-phospho-Glu-tRNA(Gln). The polypeptide is Glutamyl-tRNA(Gln) amidotransferase subunit B, mitochondrial (Vanderwaltozyma polyspora (strain ATCC 22028 / DSM 70294 / BCRC 21397 / CBS 2163 / NBRC 10782 / NRRL Y-8283 / UCD 57-17) (Kluyveromyces polysporus)).